The sequence spans 509 residues: Probable cytochrome P450 4ac1 (509 aa).

2 residues coordinate heme: E317 and C454.

The protein belongs to the cytochrome P450 family. Requires heme as cofactor.

The protein resides in the endoplasmic reticulum membrane. It is found in the microsome membrane. Functionally, may be involved in the metabolism of insect hormones and in the breakdown of synthetic insecticides. The polypeptide is Probable cytochrome P450 4ac1 (Cyp4ac1) (Drosophila melanogaster (Fruit fly)).